A 365-amino-acid chain; its full sequence is Chorismate synthase (365 aa).

NADP(+) contacts are provided by arginine 48 and arginine 54. FMN contacts are provided by residues 131 to 133 (RSS), 243 to 244 (NA), glycine 288, 303 to 307 (KPTSS), and arginine 329.

It belongs to the chorismate synthase family. As to quaternary structure, homotetramer. It depends on FMNH2 as a cofactor.

It carries out the reaction 5-O-(1-carboxyvinyl)-3-phosphoshikimate = chorismate + phosphate. It functions in the pathway metabolic intermediate biosynthesis; chorismate biosynthesis; chorismate from D-erythrose 4-phosphate and phosphoenolpyruvate: step 7/7. Catalyzes the anti-1,4-elimination of the C-3 phosphate and the C-6 proR hydrogen from 5-enolpyruvylshikimate-3-phosphate (EPSP) to yield chorismate, which is the branch point compound that serves as the starting substrate for the three terminal pathways of aromatic amino acid biosynthesis. This reaction introduces a second double bond into the aromatic ring system. The polypeptide is Chorismate synthase (Agrobacterium fabrum (strain C58 / ATCC 33970) (Agrobacterium tumefaciens (strain C58))).